The sequence spans 381 residues: Queuine tRNA-ribosyltransferase (381 aa).

The Proton acceptor role is filled by Asp96. Residues 96 to 100 (DSGGF), Asp150, Gln193, and Gly220 each bind substrate. Residues 251–257 (GVGSPDS) are RNA binding. Asp270 functions as the Nucleophile in the catalytic mechanism. The segment at 275-279 (TRIAR) is RNA binding; important for wobble base 34 recognition. Residues Cys308, Cys310, Cys313, and His339 each coordinate Zn(2+).

Belongs to the queuine tRNA-ribosyltransferase family. In terms of assembly, homodimer. Within each dimer, one monomer is responsible for RNA recognition and catalysis, while the other monomer binds to the replacement base PreQ1. Zn(2+) serves as cofactor.

The catalysed reaction is 7-aminomethyl-7-carbaguanine + guanosine(34) in tRNA = 7-aminomethyl-7-carbaguanosine(34) in tRNA + guanine. Its pathway is tRNA modification; tRNA-queuosine biosynthesis. Its function is as follows. Catalyzes the base-exchange of a guanine (G) residue with the queuine precursor 7-aminomethyl-7-deazaguanine (PreQ1) at position 34 (anticodon wobble position) in tRNAs with GU(N) anticodons (tRNA-Asp, -Asn, -His and -Tyr). Catalysis occurs through a double-displacement mechanism. The nucleophile active site attacks the C1' of nucleotide 34 to detach the guanine base from the RNA, forming a covalent enzyme-RNA intermediate. The proton acceptor active site deprotonates the incoming PreQ1, allowing a nucleophilic attack on the C1' of the ribose to form the product. After dissociation, two additional enzymatic reactions on the tRNA convert PreQ1 to queuine (Q), resulting in the hypermodified nucleoside queuosine (7-(((4,5-cis-dihydroxy-2-cyclopenten-1-yl)amino)methyl)-7-deazaguanosine). The protein is Queuine tRNA-ribosyltransferase of Bacillus licheniformis (strain ATCC 14580 / DSM 13 / JCM 2505 / CCUG 7422 / NBRC 12200 / NCIMB 9375 / NCTC 10341 / NRRL NRS-1264 / Gibson 46).